A 164-amino-acid polypeptide reads, in one-letter code: MERFLENAMYASRWLLAPVYFGLSLALVALALKFFQEIIHVLPNIFSMAESDLILVLLSLVDMTLVGGLLVMVMFSGYENFVSQLDISKNKEKLNWLGKMDATSLKNKVAASIVAISSIHLLRVFMDAKNVPDNKLMWYVIIHLTFVLSAFVMGYLDRLTRHNH.

3 helical membrane passes run 15–35 (LLAP…LKFF), 53–73 (LILV…LVMV), and 136–156 (LMWY…MGYL).

This sequence belongs to the UPF0114 family.

It localises to the cell membrane. This is UPF0114 protein YqhA from Shigella dysenteriae serotype 1 (strain Sd197).